The primary structure comprises 247 residues: Triosephosphate isomerase (247 aa).

Residues Asn-10 and Lys-12 each coordinate substrate. The Electrophile role is filled by His-94. Glu-164 serves as the catalytic Proton acceptor.

Belongs to the triosephosphate isomerase family. As to quaternary structure, homodimer.

The protein resides in the cytoplasm. It catalyses the reaction D-glyceraldehyde 3-phosphate = dihydroxyacetone phosphate. It carries out the reaction dihydroxyacetone phosphate = methylglyoxal + phosphate. It functions in the pathway carbohydrate biosynthesis; gluconeogenesis. The protein operates within carbohydrate degradation; glycolysis; D-glyceraldehyde 3-phosphate from glycerone phosphate: step 1/1. In terms of biological role, triosephosphate isomerase is an extremely efficient metabolic enzyme that catalyzes the interconversion between dihydroxyacetone phosphate (DHAP) and D-glyceraldehyde-3-phosphate (G3P) in glycolysis and gluconeogenesis. Functionally, it is also responsible for the non-negligible production of methylglyoxal a reactive cytotoxic side-product that modifies and can alter proteins, DNA and lipids. This Caenorhabditis elegans protein is Triosephosphate isomerase (tpi-1).